Here is a 294-residue protein sequence, read N- to C-terminus: Beta-lactamase SME-1 (294 aa).

Residues 1–27 (MSNKVNFKTASFLFSVCLALSAFNAHA) form the signal peptide. C72 and C242 are oxidised to a cystine. S73 (nucleophile; acyl-ester intermediate) is an active-site residue. 4 residues coordinate a beta-lactam: S73, K76, S133, and N135. E172 functions as the Proton acceptor in the catalytic mechanism. T239 contacts a beta-lactam.

The protein belongs to the class-A beta-lactamase family.

It catalyses the reaction a beta-lactam + H2O = a substituted beta-amino acid. Its activity is regulated as follows. Partially inhibited by the beta-lactamase-blocking agents, clavulanic acid and tazobactam. Not inhibited by EDTA. Class A beta-lactamase which confers resistance to the beta-lactam antibiotics, including penicillins, some cephalosporins and carbapenems, to JM109 strain E.coli. Acts via hydrolysis of the beta-lactam ring. Has penicillin-, cephalosporin- and carbapenem-hydrolyzing activities. The chain is Beta-lactamase SME-1 from Serratia marcescens.